The following is a 95-amino-acid chain: Small ribosomal subunit protein bS20 (95 aa).

Disordered stretches follow at residues 1–26 (MALR…RSRK) and 76–95 (KSRL…AQPA). A compositionally biased stretch (low complexity) spans 80-95 (AKALNKAKAAQAAQPA).

It belongs to the bacterial ribosomal protein bS20 family.

Binds directly to 16S ribosomal RNA. In Deinococcus geothermalis (strain DSM 11300 / CIP 105573 / AG-3a), this protein is Small ribosomal subunit protein bS20.